The sequence spans 387 residues: 3-hydroxy-D-aspartate aldolase (387 aa).

An N6-(pyridoxal phosphate)lysine modification is found at K62. Pyridoxal 5'-phosphate-binding positions include Q85, T238, 256–257 (GS), and Y265. Positions 355 and 357 each coordinate Mg(2+).

It belongs to the DSD1 family. Homodimer. The cofactor is pyridoxal 5'-phosphate. Mg(2+) serves as cofactor.

It catalyses the reaction (3S)-3-hydroxy-D-aspartate = glyoxylate + glycine. The catalysed reaction is (3R)-3-hydroxy-D-aspartate = glyoxylate + glycine. Functionally, catalyzes the condensation of glyoxylate and glycine into (2R,3S)-beta-hydroxyaspartate ((3S)-3-hydroxy-D-aspartate). Is essential for the growth of P.denitrificans in the presence of glycolate and glyoxylate since it functions in glyoxylate assimilation via the beta-hydroxyaspartate cycle (BHAC). Is also able to catalyze the reverse reaction in vitro, i.e. the cleavage of (3S)-3-hydroxy-D-aspartate, and that of D-threonine to a lesser extent. In Paracoccus denitrificans (strain Pd 1222), this protein is 3-hydroxy-D-aspartate aldolase.